Consider the following 420-residue polypeptide: Anaerobic glycerol-3-phosphate dehydrogenase subunit B (420 aa).

The protein belongs to the anaerobic G-3-P dehydrogenase subunit B family. Composed of a catalytic GlpA/B dimer and of membrane bound GlpC. FMN is required as a cofactor.

It carries out the reaction a quinone + sn-glycerol 3-phosphate = dihydroxyacetone phosphate + a quinol. It functions in the pathway polyol metabolism; glycerol degradation via glycerol kinase pathway; glycerone phosphate from sn-glycerol 3-phosphate (anaerobic route): step 1/1. In terms of biological role, conversion of glycerol 3-phosphate to dihydroxyacetone. Uses fumarate or nitrate as electron acceptor. The protein is Anaerobic glycerol-3-phosphate dehydrogenase subunit B of Pectobacterium atrosepticum (strain SCRI 1043 / ATCC BAA-672) (Erwinia carotovora subsp. atroseptica).